A 402-amino-acid chain; its full sequence is Homoserine O-acetyltransferase (402 aa).

Residues 38 to 359 (NAVLVCHALT…HGHDAFLVEP (322 aa)) form the AB hydrolase-1 domain. The active-site Nucleophile is Ser146. Arg217 is a binding site for substrate. Active-site residues include Asp319 and His352. Asp353 lines the substrate pocket.

Belongs to the AB hydrolase superfamily. MetX family. Homodimer.

It is found in the cytoplasm. The enzyme catalyses L-homoserine + acetyl-CoA = O-acetyl-L-homoserine + CoA. It participates in amino-acid biosynthesis; L-methionine biosynthesis via de novo pathway; O-acetyl-L-homoserine from L-homoserine: step 1/1. Functionally, transfers an acetyl group from acetyl-CoA to L-homoserine, forming acetyl-L-homoserine. The protein is Homoserine O-acetyltransferase of Haloarcula marismortui (strain ATCC 43049 / DSM 3752 / JCM 8966 / VKM B-1809) (Halobacterium marismortui).